The chain runs to 187 residues: Mitochondrial import receptor subunit TOM20-4 (187 aa).

At M1 the chain carries N-acetylmethionine. The Cytoplasmic portion of the chain corresponds to 1–160 (MDMQNENERL…QKKTSEFKYD (160 aa)). A TPR repeat occupies 84 to 117 (LSFGFLSSDQTEASDNFEKASQFFQLAVEEQPES). The helical transmembrane segment at 161 to 178 (VFGWVILASYVVAWISFA) threads the bilayer. Topologically, residues 179-187 (NSQTPVSRQ) are mitochondrial intermembrane. Positions 179 to 187 (NSQTPVSRQ) match the AKR2A-binding sequence (ABS) required for mitochondrion outer membrane targeting motif.

Belongs to the Tom20 family. Forms part of the preprotein translocase complex of the outer mitochondrial membrane (TOM complex) which consists of at least 6 different proteins (TOM5, TOM6, TOM7, TOM20, TOM22/TOM9 and TOM40). Interacts with a variety of mitochondrial precursor proteins. Interacts with AKR2A. Component of a mitochondrial large protein complex that contains, at least, MIC60, DGS1, TOM40, TOM20 proteins, and petC/RISP. Post-translationally, the N-terminus is blocked. Expressed in roots, flowers, young cotyledons and leaves.

The protein resides in the mitochondrion outer membrane. Central component of the receptor complex responsible for the recognition and translocation of cytosolically synthesized mitochondrial preproteins. Together with TOM22 functions as the transit peptide receptor at the surface of the mitochondrion outer membrane and facilitates the movement of preproteins into the translocation pore. This chain is Mitochondrial import receptor subunit TOM20-4, found in Arabidopsis thaliana (Mouse-ear cress).